Here is a 64-residue protein sequence, read N- to C-terminus: UPF0370 protein YPA_2246 (64 aa).

Residues 3–23 (WLADYWWIILILLVGMILNGI) traverse the membrane as a helical segment. Residues 36–47 (DNKPELPPHRDN) are compositionally biased toward basic and acidic residues. Residues 36-64 (DNKPELPPHRDNNAQWDDEDDWPDQNKKK) are disordered.

The protein belongs to the UPF0370 family.

It localises to the cell membrane. This chain is UPF0370 protein YPA_2246, found in Yersinia pestis bv. Antiqua (strain Antiqua).